The following is a 352-amino-acid chain: C-C chemokine receptor type 5 (352 aa).

The Extracellular portion of the chain corresponds to 1–30; the sequence is MDYQVSSPTYDIDYYTSEPCQKINVKQIAA. Sulfotyrosine is present on tyrosine 3. O-linked (GalNAc...) serine glycans are attached at residues serine 6 and serine 7. Sulfotyrosine is present on residues tyrosine 10, tyrosine 14, and tyrosine 15. Intrachain disulfides connect cysteine 20–cysteine 269 and cysteine 101–cysteine 178. Residues 31 to 58 form a helical membrane-spanning segment; the sequence is RLLPPLYSLVFIFGFVGNILVVLILINC. Residues 59–68 are Cytoplasmic-facing; it reads KRLKSMTDIY. The helical transmembrane segment at 69-89 threads the bilayer; sequence LLNLAISDLLFLLTVPFWAHY. Topologically, residues 90-102 are extracellular; the sequence is AAAQWDFGNTMCQ. Residues 103–124 traverse the membrane as a helical segment; that stretch reads LLTGLYFIGFFSGIFFIILLTI. At 125–141 the chain is on the cytoplasmic side; the sequence is DRYLAIVHAVFALKART. Residues 142–166 form a helical membrane-spanning segment; it reads VTFGVVTSVITWVVAVFASLPRIIF. Over 167 to 198 the chain is Extracellular; it reads TTSHRERLHYTCSSHFPYSQYQFWKNFHTLKI. Residues 199-218 traverse the membrane as a helical segment; sequence VILGLVLPLLVMVICYSGIL. The Cytoplasmic portion of the chain corresponds to 219 to 235; the sequence is KTLLRCRNEKKRHRAVR. A helical transmembrane segment spans residues 236-260; the sequence is LIFTIMIVYFLFWAPYNIVLLLNTF. Topologically, residues 261–277 are extracellular; sequence QEFFGLNNCSSSNRLDQ. The chain crosses the membrane as a helical span at residues 278 to 301; that stretch reads AMQVTETLGMTHCCINPIIYAFVG. The Cytoplasmic portion of the chain corresponds to 302–352; that stretch reads EKFRNYLLVFFQKHIAKRFCKCCSIFQQEAPERASSVYTRSTGEQEISVGL. S-palmitoyl cysteine attachment occurs at residues cysteine 321, cysteine 323, and cysteine 324. A phosphoserine; by BARK1 mark is found at serine 336, serine 337, serine 342, and serine 349.

The protein belongs to the G-protein coupled receptor 1 family. Interacts with PRAF2. Efficient ligand binding to CCL3/MIP-1alpha and CCL4/MIP-1beta requires sulfation, O-glycosylation and sialic acid modifications. Glycosylation on Ser-6 is required for efficient binding of CCL4. Interacts with GRK2. Interacts with ARRB1 and ARRB2. Interacts with CNIH4. Interacts with S100A4; this interaction stimulates T-lymphocyte chemotaxis. In terms of processing, sulfated on at least 2 of the N-terminal tyrosines. Sulfation is required for efficient binding of the chemokines, CCL3 and CCL4. Palmitoylation in the C-terminal is important for cell surface expression. Post-translationally, phosphorylation on serine residues in the C-terminal is stimulated by binding CC chemokines especially by APO-RANTES. In terms of processing, O-glycosylated, but not N-glycosylated. Ser-6 appears to be the major site even if Ser-7 may be also O-glycosylated. Also sialylated glycans present which contribute to chemokine binding. Thr-16 and Ser-17 may also be glycosylated and, if so, with small moieties such as a T-antigen.

The protein resides in the cell membrane. Functionally, receptor for a number of inflammatory CC-chemokines including CCL3/MIP-1-alpha, CCL4/MIP-1-beta and RANTES and subsequently transduces a signal by increasing the intracellular calcium ion level. May play a role in the control of granulocytic lineage proliferation or differentiation. Participates in T-lymphocyte migration to the infection site by acting as a chemotactic receptor. This is C-C chemokine receptor type 5 (CCR5) from Cercopithecus ascanius (Black-cheeked white-nosed monkey).